The sequence spans 798 residues: Glycogen phosphorylase (798 aa).

Lys-646 is subject to N6-(pyridoxal phosphate)lysine.

Belongs to the glycogen phosphorylase family. Pyridoxal 5'-phosphate serves as cofactor.

The catalysed reaction is [(1-&gt;4)-alpha-D-glucosyl](n) + phosphate = [(1-&gt;4)-alpha-D-glucosyl](n-1) + alpha-D-glucose 1-phosphate. In terms of biological role, phosphorylase is an important allosteric enzyme in carbohydrate metabolism. Enzymes from different sources differ in their regulatory mechanisms and in their natural substrates. However, all known phosphorylases share catalytic and structural properties. This is Glycogen phosphorylase (glgP) from Bacillus subtilis (strain 168).